The sequence spans 67 residues: Large ribosomal subunit protein uL29 (67 aa).

Belongs to the universal ribosomal protein uL29 family.

The polypeptide is Large ribosomal subunit protein uL29 (Agathobacter rectalis (strain ATCC 33656 / DSM 3377 / JCM 17463 / KCTC 5835 / VPI 0990) (Eubacterium rectale)).